We begin with the raw amino-acid sequence, 219 residues long: Mucosal pentraxin (219 aa).

The signal sequence occupies residues methionine 1 to alanine 19. One can recognise a Pentraxin (PTX) domain in the interval lysine 24–proline 219. Residue asparagine 51 is glycosylated (N-linked (GlcNAc...) asparagine). An intrachain disulfide couples cysteine 55 to cysteine 114. 6 residues coordinate Ca(2+): aspartate 77, asparagine 78, glutamate 155, glutamine 156, aspartate 157, and glutamine 167.

The protein belongs to the pentraxin family. As to quaternary structure, homopentamer. Pentraxin (or pentaxin) have a discoid arrangement of 5 non-covalently bound subunits. The cofactor is Ca(2+). Expressed in colon.

It is found in the secreted. The protein is Mucosal pentraxin (Mptx1) of Mus musculus (Mouse).